The chain runs to 547 residues: Chaperonin GroEL (547 aa).

Residues 29 to 32, 86 to 90, Gly-413, 478 to 480, and Asp-494 contribute to the ATP site; these read TLGP, DGTTT, and DVL.

This sequence belongs to the chaperonin (HSP60) family. In terms of assembly, forms a cylinder of 14 subunits composed of two heptameric rings stacked back-to-back. Interacts with the co-chaperonin GroES.

Its subcellular location is the cytoplasm. The enzyme catalyses ATP + H2O + a folded polypeptide = ADP + phosphate + an unfolded polypeptide.. In terms of biological role, together with its co-chaperonin GroES, plays an essential role in assisting protein folding. The GroEL-GroES system forms a nano-cage that allows encapsulation of the non-native substrate proteins and provides a physical environment optimized to promote and accelerate protein folding. The chain is Chaperonin GroEL from Alkaliphilus metalliredigens (strain QYMF).